We begin with the raw amino-acid sequence, 132 residues long: Small ribosomal subunit protein uS8 (132 aa).

It belongs to the universal ribosomal protein uS8 family. In terms of assembly, part of the 30S ribosomal subunit. Contacts proteins S5 and S12.

One of the primary rRNA binding proteins, it binds directly to 16S rRNA central domain where it helps coordinate assembly of the platform of the 30S subunit. This chain is Small ribosomal subunit protein uS8, found in Lactobacillus helveticus (strain DPC 4571).